Consider the following 304-residue polypeptide: Mitochondrial RNA-splicing protein MRS4 (304 aa).

3 Solcar repeats span residues 21–108, 118–200, and 207–300; these read APLH…CKAR, HQPM…ASKF, and YNPL…AKHF. Transmembrane regions (helical) follow at residues 23–41, 83–102, 120–139, 175–194, 209–228, and 275–288; these read LHSQ…HSLM, GVQS…FGTY, PMKT…ALMN, SYPT…FMIY, PLIH…ALTT, and GLKP…PATA.

Belongs to the mitochondrial carrier (TC 2.A.29) family.

The protein localises to the mitochondrion inner membrane. Functionally, MRS4 suppresses a mitochondrial splice defect in the first intron of the COB gene. It may act as a carrier, exerting its suppressor activity via modulation of solute concentrations in the mitochondrion (possibly of cations). Not essential. The chain is Mitochondrial RNA-splicing protein MRS4 (MRS4) from Saccharomyces cerevisiae (strain ATCC 204508 / S288c) (Baker's yeast).